The chain runs to 82 residues: Large ribosomal subunit protein bL27 (82 aa).

The tract at residues 1–21 (MAHKKGASSSRNGRDSNAKRL) is disordered.

Belongs to the bacterial ribosomal protein bL27 family.

The polypeptide is Large ribosomal subunit protein bL27 (Tropheryma whipplei (strain TW08/27) (Whipple's bacillus)).